Consider the following 140-residue polypeptide: Heavy metal-associated isoprenylated plant protein 31 (140 aa).

Residues 3–67 (MTVEIRVPNL…AVRRAGKAAE (65 aa)) form the HMA domain. A metal cation-binding residues include C14 and C17. C137 carries the cysteine methyl ester modification. C137 is lipidated: S-farnesyl cysteine. A propeptide spans 138 to 140 (TIM) (removed in mature form).

This sequence belongs to the HIPP family.

In terms of biological role, heavy-metal-binding protein. This chain is Heavy metal-associated isoprenylated plant protein 31, found in Arabidopsis thaliana (Mouse-ear cress).